Consider the following 332-residue polypeptide: Melanocortin receptor 4 (332 aa).

At 1-43 (MNSTHHHGMYTSLHLWNRSSHGLHGNASESLGKGHSDGGCYEQ) the chain is on the extracellular side. 3 N-linked (GlcNAc...) asparagine glycosylation sites follow: N2, N17, and N26. Cystine bridges form between C40–C279 and C271–C277. The chain crosses the membrane as a helical span at residues 44 to 69 (LFVSPEVFVTLGVISLLENILVIVAI). Residues 70–81 (AKNKNLHSPMYF) lie on the Cytoplasmic side of the membrane. A helical transmembrane segment spans residues 82–106 (FICSLAVADMLVSVSNGSETIVITL). Residues E100, D122, and D126 each contribute to the Ca(2+) site. Over 107–123 (LNSTDTDAQSFTVNIDN) the chain is Extracellular. Residues 124 to 145 (VIDSVICSSLLASICSLLSIAV) traverse the membrane as a helical segment. Residues 146–165 (DRYFTIFYALQYHNIMTVRR) are Cytoplasmic-facing. Residues 166 to 186 (VGIIISCIWAACTVSGVLFII) form a helical membrane-spanning segment. Topologically, residues 187-191 (YSDSS) are extracellular. A helical transmembrane segment spans residues 192-215 (AVIICLITMFFTMLVLMASLYVHM). The Cytoplasmic portion of the chain corresponds to 216–248 (FLMARLHIKRIAVLPGTGTIRQGANMKGAITLT). A helical membrane pass occupies residues 249 to 271 (ILIGVFVVCWAPFFLHLLFYISC). The Extracellular portion of the chain corresponds to 272–280 (PQNPYCVCF). Residues 281-304 (MSHFNLYLILIMCNAVIDPLIYAL) traverse the membrane as a helical segment. The Cytoplasmic segment spans residues 305–332 (RSQELRKTFKEIICFYPLGGICELPGRY). Residue C318 is the site of S-palmitoyl cysteine attachment.

The protein belongs to the G-protein coupled receptor 1 family. In terms of assembly, homodimer; disulfide-linked, also forms higher order oligomers. Interacts with GNAS. Interacts with ATRNL1. Interacts with MGRN1; this interaction competes with GNAS-binding and thus inhibits agonist-induced cAMP production. Interacts with MRAP and MRAP2; these associated factors increase ligand-sensitivity and generation of cAMP. In terms of tissue distribution, brain, enriched in the striatum, nucleus accumbens, and periaqueductal gray.

The protein resides in the cell membrane. Hormone receptor that acts as a key component of the leptin-melanocortin pathway at the intersection of homeostatic maintenance of energetic state. Plays a role in regulating food intake: activation by a stimulating hormone such as anorexigenic alpha-melanocyte stimulating hormone (alpha-MSH) inhibits appetite, whereas binding to a natural antagonist like Agouti-related protein/AGRP promotes appetite. G-protein-coupled receptor that activates conventional Galphas signaling leading to induction of anorexogenic signaling in the hypothalamus to result in negative energy balance. Regulates the firing activity of neurons from the hypothalamus by alpha-MSH and AGRP independently of Galphas signaling by ligand-induced coupling of closure of inwardly rectifying potassium channel KCNJ13. In intestinal epithelial cells, plays a role in the inhibition of hepatic glucose production via nesfatin-1/NUCB2 leading to increased cyclic adenosine monophosphate (cAMP) levels and glucagon-like peptide 1 (GLP-1) secretion in the intestinal epithelium. This Rattus norvegicus (Rat) protein is Melanocortin receptor 4 (Mc4r).